The sequence spans 1003 residues: MEDAHAKKWEEVVDYFGVDPERGLALEQVKKNQEKYGPNELPAEEGKSLLTLILEQFDDLLVKILLLAAIISLVLALFEEHDDEAEQLTAYVEPFVILLILIANAVVGVWQEKNAESAIEALKEYEPEMGKVIRADKTGIQKIKARDLVPGDIVEISVGDKIPADLRLISILSTTLRIDQSILTGESVSVIKHTDPVPDPRAVNQDKKNMLFSGTNVSAGKARGVVMGTGLNTAIGSIRTQMFETEEMKTPLQQKLDEFGEQLSKVISVICVAVWAINIGHFNDPAHGGSWIKGAIYYFKIAVALAVAAIPEGLPAVITTCLALGTRRMAKKNAIVRSLPSVETLGCTSVICSDKTGTLTTNQMSVSRMFVFKDIPDDAAPELYQFELTGSTYEPIGETFMQGQKINAADYDAVKEITTICMMCNDSAIDFNEYKQAFEKVGEATETALIVLGEKLNPYNLSKAGKDRRSAALVVREDMDTRWKKEFTLEFSRDRKSMSSYCVPLKAGLLSNGPKMFVKGAPEGVLDRCTHVRVGTKKVPMTPAIMDKILEVTRAYGTGRDTLRCLALATIDDPMDPKDMDIIDSTKFVKYEQNCTFVGVVGMLDPPRKEVLDAIERCRAAGIRVIVITGDNKATAEAICRRIGVFGEDENTEGMAYTGREFDDLSVEGQRDAVARSRLFARVEPFHKSKIVEYLQGMGEISAMTGDGVNDAPALKKAEIGIAMGSGTAVAKSAAEMVLADDNFSTIVAAVEEGRAIYNNMKQFIRYLISSNIGEVVSIFLTAALGLPEALIPVQLLWVNLVTDGLPATALGFNPPDLDIMNKPPRRADEGLITGWLFFRYMAIGTYVGAATVGAAAHWFMMSPTGPGLNFYQLSHHLQCTPENEYFEGIDCEIFSDPHPMTMALSVLVTIEMLNAINSLSENQSLLVMPPWSNIWLISAICLSMTLHFVILYVEILSTVFQICPLTLTEWIVVLKISFPVLLLDEVLKFVARKYTDEFSFIK.

Over 1-59 the chain is Cytoplasmic; the sequence is MEDAHAKKWEEVVDYFGVDPERGLALEQVKKNQEKYGPNELPAEEGKSLLTLILEQFDD. A helical membrane pass occupies residues 60–78; that stretch reads LLVKILLLAAIISLVLALF. Residues 79-89 are Extracellular-facing; that stretch reads EEHDDEAEQLT. The helical transmembrane segment at 90–110 threads the bilayer; the sequence is AYVEPFVILLILIANAVVGVW. Topologically, residues 111-262 are cytoplasmic; it reads QEKNAESAIE…QQKLDEFGEQ (152 aa). Residues 263–282 traverse the membrane as a helical segment; the sequence is LSKVISVICVAVWAINIGHF. Topologically, residues 283 to 300 are extracellular; the sequence is NDPAHGGSWIKGAIYYFK. Residues 301-318 form a helical membrane-spanning segment; that stretch reads IAVALAVAAIPEGLPAVI. Topologically, residues 319-775 are cytoplasmic; that stretch reads TTCLALGTRR…RYLISSNIGE (457 aa). Aspartate 354 acts as the 4-aspartylphosphate intermediate in catalysis. Lysine 519 is a binding site for ATP. The helical transmembrane segment at 776 to 799 threads the bilayer; sequence VVSIFLTAALGLPEALIPVQLLWV. The Extracellular portion of the chain corresponds to 800-840; it reads NLVTDGLPATALGFNPPDLDIMNKPPRRADEGLITGWLFFR. The helical transmembrane segment at 841–863 threads the bilayer; it reads YMAIGTYVGAATVGAAAHWFMMS. Residues 864-898 lie on the Cytoplasmic side of the membrane; sequence PTGPGLNFYQLSHHLQCTPENEYFEGIDCEIFSDP. A helical transmembrane segment spans residues 899 to 917; that stretch reads HPMTMALSVLVTIEMLNAI. Topologically, residues 918–934 are extracellular; sequence NSLSENQSLLVMPPWSN. A helical membrane pass occupies residues 935-954; it reads IWLISAICLSMTLHFVILYV. Residues 955-1003 are Cytoplasmic-facing; the sequence is EILSTVFQICPLTLTEWIVVLKISFPVLLLDEVLKFVARKYTDEFSFIK.

This sequence belongs to the cation transport ATPase (P-type) (TC 3.A.3) family.

The protein localises to the sarcoplasmic reticulum membrane. It carries out the reaction Ca(2+)(in) + ATP + H2O = Ca(2+)(out) + ADP + phosphate + H(+). Functionally, this magnesium-dependent enzyme catalyzes the hydrolysis of ATP coupled with the transport of the calcium. The polypeptide is Calcium-transporting ATPase sarcoplasmic/endoplasmic reticulum type (Artemia franciscana (Brine shrimp)).